Consider the following 484-residue polypeptide: Glutamate--tRNA ligase (484 aa).

A 'HIGH' region motif is present at residues 11–21 (PSPTGYLHIGN). The 'KMSKS' region signature appears at 252–256 (KLSKR). Lys-255 provides a ligand contact to ATP.

It belongs to the class-I aminoacyl-tRNA synthetase family. Glutamate--tRNA ligase type 1 subfamily. As to quaternary structure, monomer.

It is found in the cytoplasm. It carries out the reaction tRNA(Glu) + L-glutamate + ATP = L-glutamyl-tRNA(Glu) + AMP + diphosphate. In terms of biological role, catalyzes the attachment of glutamate to tRNA(Glu) in a two-step reaction: glutamate is first activated by ATP to form Glu-AMP and then transferred to the acceptor end of tRNA(Glu). The chain is Glutamate--tRNA ligase from Staphylococcus aureus (strain Newman).